We begin with the raw amino-acid sequence, 319 residues long: Methionyl-tRNA formyltransferase (319 aa).

113–116 (SLLP) lines the (6S)-5,6,7,8-tetrahydrofolate pocket.

This sequence belongs to the Fmt family.

The catalysed reaction is L-methionyl-tRNA(fMet) + (6R)-10-formyltetrahydrofolate = N-formyl-L-methionyl-tRNA(fMet) + (6S)-5,6,7,8-tetrahydrofolate + H(+). Functionally, attaches a formyl group to the free amino group of methionyl-tRNA(fMet). The formyl group appears to play a dual role in the initiator identity of N-formylmethionyl-tRNA by promoting its recognition by IF2 and preventing the misappropriation of this tRNA by the elongation apparatus. This Hamiltonella defensa subsp. Acyrthosiphon pisum (strain 5AT) protein is Methionyl-tRNA formyltransferase.